The chain runs to 548 residues: Eukaryotic translation initiation factor 3 subunit D (548 aa).

K53 is subject to N6-acetyllysine. Residue S161 is modified to Phosphoserine. An RNA gate region spans residues 285–299 (DFDLLTVSETANEPP). The interval 523–548 (PDGTFSSDEDEEEEEEEEEEEEEEET) is disordered. Phosphoserine is present on residues S528 and S529. A compositionally biased stretch (acidic residues) spans 529–548 (SDEDEEEEEEEEEEEEEEET).

Belongs to the eIF-3 subunit D family. As to quaternary structure, component of the eukaryotic translation initiation factor 3 (eIF-3) complex, which is composed of 13 subunits: EIF3A, EIF3B, EIF3C, EIF3D, EIF3E, EIF3F, EIF3G, EIF3H, EIF3I, EIF3J, EIF3K, EIF3L and EIF3M. The eIF-3 complex appears to include 3 stable modules: module A is composed of EIF3A, EIF3B, EIF3G and EIF3I; module B is composed of EIF3F, EIF3H, and EIF3M; and module C is composed of EIF3C, EIF3D, EIF3E, EIF3K and EIF3L. EIF3C of module C binds EIF3B of module A and EIF3H of module B, thereby linking the three modules. EIF3J is a labile subunit that binds to the eIF-3 complex via EIF3B. The eIF-3 complex interacts with RPS6KB1 under conditions of nutrient depletion. Mitogenic stimulation leads to binding and activation of a complex composed of MTOR and RPTOR, leading to phosphorylation and release of RPS6KB1 and binding of EIF4B to eIF-3. In terms of assembly, (Microbial infection) Interacts with Norwalk virus VPg protein.

Its subcellular location is the cytoplasm. MRNA cap-binding component of the eukaryotic translation initiation factor 3 (eIF-3) complex, a complex required for several steps in the initiation of protein synthesis of a specialized repertoire of mRNAs. The eIF-3 complex associates with the 40S ribosome and facilitates the recruitment of eIF-1, eIF-1A, eIF-2:GTP:methionyl-tRNAi and eIF-5 to form the 43S pre-initiation complex (43S PIC). The eIF-3 complex stimulates mRNA recruitment to the 43S PIC and scanning of the mRNA for AUG recognition. The eIF-3 complex is also required for disassembly and recycling of post-termination ribosomal complexes and subsequently prevents premature joining of the 40S and 60S ribosomal subunits prior to initiation. The eIF-3 complex specifically targets and initiates translation of a subset of mRNAs involved in cell proliferation, including cell cycling, differentiation and apoptosis, and uses different modes of RNA stem-loop binding to exert either translational activation or repression. In the eIF-3 complex, EIF3D specifically recognizes and binds the 7-methylguanosine cap of a subset of mRNAs. In terms of biological role, (Microbial infection) In case of FCV infection, plays a role in the ribosomal termination-reinitiation event leading to the translation of VP2. The protein is Eukaryotic translation initiation factor 3 subunit D of Homo sapiens (Human).